The following is a 448-amino-acid chain: MKLILVLLCLISTLFVVKGGLSPTEQQIIVSYHNKWRSSPIGPTPSTTIPALKWNATIAAALQSSLDKCDGKFSTMSQYGTNSEWQSWWTPNTYFNLNATLDNIQKGASFYDWNAKGCNSSANYNCQLWTYAVWSKSTSYGCAKTICPDKSEVSCSYYPAGGFKGVLPYTPKTTTPAPTTPAPTTPKPTTPAPTTPKPTTPAPTTPKPTTPAPTTPKPTTPAPTTPKPTTPAPTTPAPTSTLTVDWTSYQTPIRDQGQCGSCWAFASSAALESRYLIKYGTAQKSTLQLSNQNAVNCIASGCNGGWSGNYFNFFKTPGIAYEKDDPYKAVTGTSCITTSSVARFKYTNYGYTEKTKAALLAELKKGPVTIAVYVDSAFQNYKSGIYNSATKYTGINHLVLLVGYDQATDAYKIKNSWGSWWGESGYMRITASNDNLAIFAYNSYYPTF.

An N-terminal signal peptide occupies residues 1–19 (MKLILVLLCLISTLFVVKG). An SCP domain is found at 30–157 (VSYHNKWRSS…PDKSEVSCSY (128 aa)). 3 N-linked (GlcNAc...) asparagine glycosylation sites follow: Asn55, Asn98, and Asn119. The disordered stretch occupies residues 171–242 (PKTTTPAPTT…PTTPAPTSTL (72 aa)). Residues 178 to 236 (PTTPAPTTPKPTTPAPTTPKPTTPAPTTPKPTTPAPTTPKPTTPAPTTPKPTTPAPTTP) show a composition bias toward pro residues. Catalysis depends on residues Cys262, His397, and Asn415.

The protein belongs to the peptidase C1 family.

The protein resides in the secreted. Functionally, thiol protease that seems to be involved in the sexual development. This chain is Gamete and mating-type specific protein A (gmsA), found in Dictyostelium discoideum (Social amoeba).